Here is a 253-residue protein sequence, read N- to C-terminus: Ubiquinone biosynthesis O-methyltransferase (253 aa).

The S-adenosyl-L-methionine site is built by Arg-47, Gly-78, Asp-99, and Met-141.

This sequence belongs to the methyltransferase superfamily. UbiG/COQ3 family.

The enzyme catalyses a 3-demethylubiquinol + S-adenosyl-L-methionine = a ubiquinol + S-adenosyl-L-homocysteine + H(+). It catalyses the reaction a 3-(all-trans-polyprenyl)benzene-1,2-diol + S-adenosyl-L-methionine = a 2-methoxy-6-(all-trans-polyprenyl)phenol + S-adenosyl-L-homocysteine + H(+). It functions in the pathway cofactor biosynthesis; ubiquinone biosynthesis. O-methyltransferase that catalyzes the 2 O-methylation steps in the ubiquinone biosynthetic pathway. The sequence is that of Ubiquinone biosynthesis O-methyltransferase from Rhodopseudomonas palustris (strain ATCC BAA-98 / CGA009).